A 303-amino-acid chain; its full sequence is Thioesterase poxG (303 aa).

The protein belongs to the lcsJ thioesterase family.

It functions in the pathway secondary metabolite biosynthesis. Its function is as follows. Thioesterase; part of the gene cluster that mediates the biosynthesis of oxaleimides, cytotoxic compounds containing an unusual disubstituted succinimide moiety. The first step of the pathway is provided by the HR-PKS poxF that serves in a new mode of collaborative biosynthesis with the PKS-NRPS poxE, by providing the olefin containing amino acid substrate via the synthesis of an ACP-bound dec-4-enoate. The cytochrome P450 monooxygenase poxM-catalyzed oxidation at the alpha-position creates the enzyme-bound 2-hydroxydec-4-enoyl-ACP thioester, which may be prone to spontaneous hydrolysis to yield 2-hydroxydec-4-enoic acid due to increased electrophilicity of the carbonyl. 2-hydroxydec-4-enoic acid can then be further oxidized by poxM to yield the alpha-ketoacid 2-oxodec-4-enoicacid, which is reductively aminated by the aminotransferase poxL to yield (S,E)-2-aminodec-4-enoic acid. The Hybrid PKS-NRPS synthetase poxE then performs condensation between the octaketide product of its PKS modules and the amino group of (S,E)-2-aminodec-4-enoic acid which is activated and incorporated by the adenylation domain. The resulting aminoacyl product can be cyclized by the Diels-Alderase PoxQ and reductively released by the reductive (R) domain of poxE to yield an aldehyde intermediate. The released aldehyde is then substrate for a Knoevenagel condensation by the hydrolyase poxO followed by an oxidation at the 5-position of the pyrrolidone ring. The presence of the olefin from the amino acid building block allows for migration of the substituted allyl group to occur. This allylic transposition reaction takes place in a conjugate addition, semipinacol-like fashion to yield a succinimide intermediate. Iterative two-electron oxidations of the C7 methyl of the succinimide intermediate to the carboxylic acid can be catalyzed by one of two remaining cytochrome P450 monooxygenasess poxC or poxD to yield oxaleimide A. Subsequent oxidation yields the maleimide scaffold oxaleimide I. Both oxaleimide A and oxaleimide I can undergo oxidative modifications in the decalin ring to yield the series of products oxaleimides B to H. In Penicillium oxalicum (strain 114-2 / CGMCC 5302) (Penicillium decumbens), this protein is Thioesterase poxG.